Here is a 144-residue protein sequence, read N- to C-terminus: Bacilliredoxin BCE_4227 (144 aa).

Belongs to the bacilliredoxin family.

The polypeptide is Bacilliredoxin BCE_4227 (Bacillus cereus (strain ATCC 10987 / NRS 248)).